The chain runs to 300 residues: Protein SPEAR4 (300 aa).

Residues 1-10 are compositionally biased toward polar residues; the sequence is MCSKTSSVSY. A disordered region spans residues 1–45; it reads MCSKTSSVSYGNREDDDNYSSLCPKKQKHNNGGKKRVPRRGPGVA. Residues 25–39 are compositionally biased toward basic residues; that stretch reads KKQKHNNGGKKRVPR. Positions 40-48 match the SPL motif; it reads RGPGVAELE. The EAR signature appears at 294–300; that stretch reads IDLRLKL.

Interacts with SPL and SPEAR2. Expressed in leaves.

Adapter-like transcriptional repressor recruiting TPL/TPR coepressors to inhibit TCP transcription factors. May be involved in leaf development. In Arabidopsis thaliana (Mouse-ear cress), this protein is Protein SPEAR4.